The primary structure comprises 379 residues: Alcohol dehydrogenase class-2 isozyme 2 (379 aa).

Residues Cys47, His69, Cys99, Cys102, Cys105, Cys113, and Cys176 each contribute to the Zn(2+) site. Residues 205–210, Asp229, Lys234, 298–300, and Arg374 contribute to the NAD(+) site; these read GLGGVG and VGV.

It belongs to the zinc-containing alcohol dehydrogenase family. Class-II subfamily. Homodimer. Requires Zn(2+) as cofactor.

The protein resides in the cytoplasm. It carries out the reaction a primary alcohol + NAD(+) = an aldehyde + NADH + H(+). The catalysed reaction is a secondary alcohol + NAD(+) = a ketone + NADH + H(+). The chain is Alcohol dehydrogenase class-2 isozyme 2 (ADH2-2) from Oryctolagus cuniculus (Rabbit).